A 1028-amino-acid polypeptide reads, in one-letter code: MCSVLRFQRNMASWVKRHVFTFDLGDIQEKRGSDSGSGQSRSTADRYFNAVFGLGLLLFCIVCMAYLSPFLGSDLPQCRSVTMYPSYALVQGFDRRFSRLGRKYHLYLYREAGKDNGFSDDNEIHLDGIPVLFIPGNAGTYKQVRSIAAATANLYYGEMRDALNNNNTKNLDFFTADFNEDFTAFHGRTMLDQAEYCNDAIRYILSIYELSDKYRASGEPLPTSVLVVGHSMGGIVARVMTTLKNHIPQSINTILTLSSPHSTAPATFDGDILKIYNAMNAFWESKFRDRDKDPFYAENVSVISITGGVLDSVLPADYTSLEGIIPSDNGFTTYTTTIPWVWTPIDHLAIVWCDQLRIVVAKLLLELVDRTSASKTRPLPDRMRLARRSLLSGLESSASADFHLWDNEDYIFQPKVAPGALTTAQEMSPILLNVETYDTLNEYNYLAIPHNEPNLRFSLLTSLENLEELHILFCQNYNEHNSNGPIEYSSRCVSPSQDFIHVPRSFENSKYPSESSVGSASLPFKALHFNQTLLSKYDFIKFRKPSKSSFKDEDFVLVELSTTDWQTTVNCNPFQLLLSSAKFAHNASSAPFIQTFRFPYLSSSLVSYKLDVSYTGENLVFEPFIAQSIDSPFETKWHLRLRDSVTITIHSEAPFIPFESHYDKSVKLRLIAPPDCNINLSLSINWYMTLKFLFIRYRLAVAALPLSLVSFVLANQFALYYSSSFFPDFSTTLRAVTSKFWLKLTLSSILLTPILNISFIQRLIHSLDPSGVNSPFLIRKKNIMTAAYYLGIREIFMCWIGPLLSCITLSLVYMLAFGISTLESCVRRVSCYMSTAISKTRMKEIWLKDECEYEEGLVLRRRIGSGIMILAVVLYVPYQLVFVLLFLVQLNTVIKLNINYFNTKRHSNLRNYNSSYLLLMLCVLPINAPMVFVFLHNFGRRWVTSFRSHHNCLAILPIILLVCDNAGLRIPRSHCIERISKLITIGSFLYLSLYSVIYGIRNLFWAHHLVNLISGWLLFTSLDLTSNN.

A helical transmembrane segment spans residues 51-71 (VFGLGLLLFCIVCMAYLSPFL). Residue Asn166 is glycosylated (N-linked (GlcNAc...) asparagine). Residue Ser231 is part of the active site. Residues Asn299, Asn530, Asn586, and Asn679 are each glycosylated (N-linked (GlcNAc...) asparagine). Helical transmembrane passes span 699 to 719 (LAVA…QFAL), 740 to 760 (FWLK…ISFI), 799 to 819 (WIGP…AFGI), 867 to 887 (IMIL…LLFL), 915 to 935 (SYLL…FVFL), 948 to 968 (SHHN…NAGL), 979 to 999 (ISKL…VIYG), and 1002 to 1022 (NLFW…FTSL).

The protein belongs to the GPI inositol-deacylase family.

The protein localises to the endoplasmic reticulum membrane. In terms of biological role, involved in inositol deacylation of GPI-anchored proteins which plays important roles in the quality control and ER-associated degradation of GPI-anchored proteins. This chain is GPI inositol-deacylase (BST1), found in Eremothecium gossypii (strain ATCC 10895 / CBS 109.51 / FGSC 9923 / NRRL Y-1056) (Yeast).